A 247-amino-acid polypeptide reads, in one-letter code: ATP synthase subunit a, chloroplastic (247 aa).

5 helical membrane passes run 38-58, 95-115, 134-154, 199-219, and 220-240; these read QVLITSWVVIAILLGSAAIAV, VPFIGTMFLFIFVSNWSGALL, INTTVALALLTSVAYFYAGLT, LVVVVLVSLVPLVVPIPVMFL, and GLFTSGIQALIFATLAAAYIG.

The protein belongs to the ATPase A chain family. In terms of assembly, F-type ATPases have 2 components, CF(1) - the catalytic core - and CF(0) - the membrane proton channel. CF(1) has five subunits: alpha(3), beta(3), gamma(1), delta(1), epsilon(1). CF(0) has four main subunits: a, b, b' and c.

It is found in the plastid. The protein resides in the chloroplast thylakoid membrane. In terms of biological role, key component of the proton channel; it plays a direct role in the translocation of protons across the membrane. The chain is ATP synthase subunit a, chloroplastic from Calycanthus floridus var. glaucus (Eastern sweetshrub).